The following is a 498-amino-acid chain: NADH-quinone oxidoreductase subunit N (498 aa).

Helical transmembrane passes span 10-30 (LMPL…MLLI), 44-64 (VVGL…GKFV), 68-88 (VMGM…ILVA), 109-129 (ELYL…ASSH), 130-150 (YASF…LLAY), 164-184 (YLVL…YIYA), 207-227 (VLLG…LAPF), 239-259 (PAPM…GLFV), 273-293 (LVTV…LLAV), 301-321 (ILGY…ISMT), 328-348 (VTVY…AVAL), 377-397 (ATLT…GFIG), 412-434 (FLAA…VMVV), and 458-478 (LMVL…DPMI).

The protein belongs to the complex I subunit 2 family. NDH-1 is composed of 14 different subunits. Subunits NuoA, H, J, K, L, M, N constitute the membrane sector of the complex.

Its subcellular location is the cell inner membrane. It catalyses the reaction a quinone + NADH + 5 H(+)(in) = a quinol + NAD(+) + 4 H(+)(out). Its function is as follows. NDH-1 shuttles electrons from NADH, via FMN and iron-sulfur (Fe-S) centers, to quinones in the respiratory chain. The immediate electron acceptor for the enzyme in this species is believed to be ubiquinone. Couples the redox reaction to proton translocation (for every two electrons transferred, four hydrogen ions are translocated across the cytoplasmic membrane), and thus conserves the redox energy in a proton gradient. In Acinetobacter baumannii (strain AB0057), this protein is NADH-quinone oxidoreductase subunit N.